A 100-amino-acid chain; its full sequence is ATP phosphoribosyltransferase (100 aa).

This sequence belongs to the ATP phosphoribosyltransferase family. Long subfamily. As to quaternary structure, equilibrium between an active dimeric form, an inactive hexameric form and higher aggregates. Interconversion between the various forms is largely reversible and is influenced by the natural substrates and inhibitors of the enzyme. Requires Mg(2+) as cofactor.

It is found in the cytoplasm. The catalysed reaction is 1-(5-phospho-beta-D-ribosyl)-ATP + diphosphate = 5-phospho-alpha-D-ribose 1-diphosphate + ATP. Its pathway is amino-acid biosynthesis; L-histidine biosynthesis; L-histidine from 5-phospho-alpha-D-ribose 1-diphosphate: step 1/9. Its activity is regulated as follows. Feedback inhibited by histidine. Functionally, catalyzes the condensation of ATP and 5-phosphoribose 1-diphosphate to form N'-(5'-phosphoribosyl)-ATP (PR-ATP). Has a crucial role in the pathway because the rate of histidine biosynthesis seems to be controlled primarily by regulation of HisG enzymatic activity. In Klebsiella pneumoniae, this protein is ATP phosphoribosyltransferase (hisG).